Reading from the N-terminus, the 133-residue chain is Small ribosomal subunit protein uS8 (133 aa).

It belongs to the universal ribosomal protein uS8 family. Part of the 30S ribosomal subunit. Contacts proteins S5 and S12.

Functionally, one of the primary rRNA binding proteins, it binds directly to 16S rRNA central domain where it helps coordinate assembly of the platform of the 30S subunit. The chain is Small ribosomal subunit protein uS8 from Gloeobacter violaceus (strain ATCC 29082 / PCC 7421).